We begin with the raw amino-acid sequence, 626 residues long: Extracellular metalloproteinase 1 (626 aa).

The signal sequence occupies residues 1 to 17 (MLSSLLAGAGLVALAAS). A propeptide spanning residues 18 to 241 (HPTSHGNALT…IHGVVDYSAD (224 aa)) is cleaved from the precursor. Residue asparagine 315 is glycosylated (N-linked (GlcNAc...) asparagine). Zn(2+) is bound at residue histidine 425. Residue glutamate 426 is part of the active site. Histidine 429 contacts Zn(2+). The disordered stretch occupies residues 606–626 (GSGARYSSTARTGSTALPSGC). Over residues 610-626 (RYSSTARTGSTALPSGC) the composition is skewed to polar residues.

The protein belongs to the peptidase M36 family. It depends on Zn(2+) as a cofactor.

It is found in the secreted. Secreted metalloproteinase that allows assimilation of proteinaceous substrates. The chain is Extracellular metalloproteinase 1 (MEP1) from Phaeosphaeria nodorum (strain SN15 / ATCC MYA-4574 / FGSC 10173) (Glume blotch fungus).